The following is a 61-amino-acid chain: Large ribosomal subunit protein uL30 (61 aa).

Belongs to the universal ribosomal protein uL30 family. In terms of assembly, part of the 50S ribosomal subunit.

This chain is Large ribosomal subunit protein uL30, found in Dichelobacter nodosus (strain VCS1703A).